We begin with the raw amino-acid sequence, 578 residues long: V-type ATP synthase alpha chain (578 aa).

Position 228–235 (228–235) interacts with ATP; that stretch reads GPFGSGKT.

Belongs to the ATPase alpha/beta chains family.

The enzyme catalyses ATP + H2O + 4 H(+)(in) = ADP + phosphate + 5 H(+)(out). Produces ATP from ADP in the presence of a proton gradient across the membrane. The V-type alpha chain is a catalytic subunit. This is V-type ATP synthase alpha chain from Thermus thermophilus (strain ATCC BAA-163 / DSM 7039 / HB27).